A 210-amino-acid chain; its full sequence is Large ribosomal subunit protein uL4 (210 aa).

Positions 49 to 76 (HCTKTRSEVSGGGKKPWRQKHTGRARHG) are disordered. Over residues 63–76 (KPWRQKHTGRARHG) the composition is skewed to basic residues.

Belongs to the universal ribosomal protein uL4 family. In terms of assembly, part of the 50S ribosomal subunit.

Functionally, one of the primary rRNA binding proteins, this protein initially binds near the 5'-end of the 23S rRNA. It is important during the early stages of 50S assembly. It makes multiple contacts with different domains of the 23S rRNA in the assembled 50S subunit and ribosome. Forms part of the polypeptide exit tunnel. The sequence is that of Large ribosomal subunit protein uL4 from Thermodesulfovibrio yellowstonii (strain ATCC 51303 / DSM 11347 / YP87).